Consider the following 431-residue polypeptide: 5-methylthioadenosine/S-adenosylhomocysteine deaminase (431 aa).

Positions 64 and 66 each coordinate Zn(2+). Residues glutamate 93, arginine 145, and histidine 183 each coordinate substrate. Histidine 210 is a binding site for Zn(2+). Residues glutamate 213 and aspartate 299 each coordinate substrate. A Zn(2+)-binding site is contributed by aspartate 299.

The protein belongs to the metallo-dependent hydrolases superfamily. MTA/SAH deaminase family. The cofactor is Zn(2+).

The enzyme catalyses S-adenosyl-L-homocysteine + H2O + H(+) = S-inosyl-L-homocysteine + NH4(+). The catalysed reaction is S-methyl-5'-thioadenosine + H2O + H(+) = S-methyl-5'-thioinosine + NH4(+). In terms of biological role, catalyzes the deamination of 5-methylthioadenosine and S-adenosyl-L-homocysteine into 5-methylthioinosine and S-inosyl-L-homocysteine, respectively. Is also able to deaminate adenosine. This is 5-methylthioadenosine/S-adenosylhomocysteine deaminase from Syntrophomonas wolfei subsp. wolfei (strain DSM 2245B / Goettingen).